A 325-amino-acid chain; its full sequence is Solute-binding protein RD1_1052 (325 aa).

The N-terminal stretch at 1–26 is a signal peptide; the sequence is MRLFTKIKGLAAVTCVAALASSAAFA. D-mannonate-binding positions include Glu-75, 93–95, 148–151, Arg-171, and Asn-211; these read GES and RGPR. L-galactonate-binding positions include Glu-75, 93-95, 148-151, Arg-171, and Asn-211; these read GES and RGPR.

It belongs to the bacterial solute-binding protein 7 family. In terms of assembly, the complex is comprised of an extracytoplasmic solute-binding protein and a heteromeric permease formed by two transmembrane proteins.

The protein resides in the periplasm. Functionally, solute-binding protein that binds L-galactonate and D-mannonate (in vitro). Probably part of a tripartite ATP-independent periplasmic (TRAP) transport system that mediates solute transport into the cytoplasm. The sequence is that of Solute-binding protein RD1_1052 from Roseobacter denitrificans (strain ATCC 33942 / OCh 114) (Erythrobacter sp. (strain OCh 114)).